The following is a 271-amino-acid chain: Proteasome inhibitor PI31 subunit (271 aa).

Position 2 is an N-acetylalanine (Ala2). An important for homodimerization and interaction with FBXO7 region spans residues 2 to 150; it reads AGLEVLFASA…PIHEQWEKVR (149 aa). A phosphoserine mark is found at Ser153 and Ser189. Arg205 is modified (omega-N-methylarginine). At Arg219 the chain carries Asymmetric dimethylarginine. The interval 221-271 is disordered; it reads LIDPSSGLPNRLPPGAVPPGARFDPFGPIGTSPSGPNPDHLPPPGYDDMYL. Arg231 bears the Omega-N-methylarginine mark. Ser252 is subject to Phosphoserine. Residues 255–265 are compositionally biased toward pro residues; sequence GPNPDHLPPPG.

Belongs to the proteasome inhibitor PI31 family. Monomer and homodimer. Interacts with FBXO7.

Its subcellular location is the cytoplasm. It localises to the endoplasmic reticulum. Its function is as follows. Plays an important role in control of proteasome function. Inhibits the hydrolysis of protein and peptide substrates by the 20S proteasome. Also inhibits the activation of the proteasome by the proteasome regulatory proteins PA700 and PA28. The polypeptide is Proteasome inhibitor PI31 subunit (Psmf1) (Rattus norvegicus (Rat)).